The sequence spans 150 residues: Developmental pluripotency-associated protein 3 (150 aa).

Over residues 1 to 22 (MEEPSEKVDPMKDPETPQKKDE) the composition is skewed to basic and acidic residues. The interval 1–32 (MEEPSEKVDPMKDPETPQKKDEEDALDDTDVL) is disordered. The segment at 1 to 75 (MEEPSEKVDP…VPVENKSEKI (75 aa)) is required for H3K9me2-binding. The tract at residues 76 to 150 (RREVQSAFPK…PSENAKIGKN (75 aa)) is required to exclude TET3 from the maternal pronucleus.

In terms of tissue distribution, expressed in the immature oocytes and in newborn ovaries. Subsequently detected in maturing oocytes and in preimplantation embryos. Expressed in pluripotent embryonic but not in differentiated somatic cells. Expressed in blastocysts, epiblasts, primordial germ cells, embryonic gonads and primitive spermatogonia. No expression is detected in adult testes.

The protein localises to the nucleus. It is found in the cytoplasm. Primordial germ cell (PGCs)-specific protein involved in epigenetic chromatin reprogramming in the zygote following fertilization. In zygotes, DNA demethylation occurs selectively in the paternal pronucleus before the first cell division, while the adjacent maternal pronucleus and certain paternally-imprinted loci are protected from this process. Participates in protection of DNA methylation in the maternal pronucleus by preventing conversion of 5mC to 5hmC: specifically recognizes and binds histone H3 dimethylated at 'Lys-9' (H3K9me2) on maternal genome, and protects maternal genome from TET3-mediated conversion to 5hmC and subsequent DNA demethylation. Does not bind paternal chromatin, which is mainly packed into protamine and does not contain much H3K9me2 mark. Also protects imprinted loci that are marked with H3K9me2 in mature sperm from DNA demethylation in early embryogenesis. May be important for the totipotent/pluripotent states continuing through preimplantation development. Also involved in chromatin condensation in oocytogenesis. The protein is Developmental pluripotency-associated protein 3 (Dppa3) of Mus musculus (Mouse).